The following is a 670-amino-acid chain: Solute carrier organic anion transporter family member 1A1 (670 aa).

The Cytoplasmic segment spans residues 1–20 (MEETEKKIATQEGRLFSKMK). The helical transmembrane segment at 21 to 40 (VFLLSLTCACLTKSLSGVYM) threads the bilayer. Residues 41-59 (NSMLTQIERQFDISTSVAG) are Extracellular-facing. A helical transmembrane segment spans residues 60–80 (LINGSFEIGNLFFIVFVSYFG). Residues 81–86 (TKLHRP) lie on the Cytoplasmic side of the membrane. The chain crosses the membrane as a helical span at residues 87-111 (VVIGIGCVIMGLGCLLMSLPHFFMG). The Extracellular segment spans residues 112 to 155 (RYEYETTISPTGNLSSNSFLCMENRTQTLKPTQDPAECVKEMKS). Asn-124 and Asn-135 each carry an N-linked (GlcNAc...) asparagine glycan. A helical membrane pass occupies residues 156-184 (LMWICVMVGNIIRGIGETPIVPLGISYIE). Topologically, residues 185 to 203 (DFAKSENSPLYIGILEMGK) are cytoplasmic. Residues 204–224 (VAGPIFGLLLGSYCAQIYVDI) traverse the membrane as a helical segment. The Extracellular segment spans residues 225–242 (GSVNTDDLTITPSDTRWV). Residues 243–267 (GAWWIGFLVCAGVNILTSIPFFFLP) traverse the membrane as a helical segment. The Cytoplasmic portion of the chain corresponds to 268-311 (KALPKKGQQENVAVTKDGKVEKYGGQAREENLGITKDFLTFMKR). Residues 312 to 333 (LFCNPIYMLFILTSVLQVNGFI) traverse the membrane as a helical segment. At 334-353 (NKFTFLPKYLEQQYGKSTAE) the chain is on the extracellular side. A helical transmembrane segment spans residues 354 to 377 (AIFLIGVYSLPPICLGYLIGGFIM). The Cytoplasmic portion of the chain corresponds to 378 to 381 (KKFK). The chain crosses the membrane as a helical span at residues 382 to 405 (ITVKKAAYLAFCLSVFEYLLFLCH). Residues 406–513 (FMLTCDNAAV…PECANRLQYF (108 aa)) are Extracellular-facing. The 56-residue stretch at 433–488 (SKVLADCNTRCSCSTNTWDPVCGDNGVAYMSACLAGCKKFVGTGTNMVFQDCSCIQ) folds into the Kazal-like domain. Disulfide bonds link Cys-439–Cys-469, Cys-445–Cys-465, and Cys-454–Cys-486. N-linked (GlcNAc...) asparagine glycosylation is present at Asn-492. A helical membrane pass occupies residues 514-536 (LILTIIISFIYSLTAIPGYMVFL). At 537–545 (RCVKSEEKS) the chain is on the cytoplasmic side. The helical transmembrane segment at 546 to 571 (LGVGLHTFCIRVFAGIPAPVYFGALI) threads the bilayer. Over 572–605 (DRTCLHWGTLKCGQRGACRMYDINSFRHIYLGLP) the chain is Extracellular. The chain crosses the membrane as a helical span at residues 606–623 (IALRGSSYLPAFFILILM). The Cytoplasmic segment spans residues 624 to 670 (RKFQFPGDIDSSATDHTEMMLGEKESEHTDVHGSPQVENDGELKTKL). A phosphoserine mark is found at Ser-634 and Ser-635. Over residues 645 to 654 (GEKESEHTDV) the composition is skewed to basic and acidic residues. The interval 645 to 670 (GEKESEHTDVHGSPQVENDGELKTKL) is disordered.

The protein belongs to the organo anion transporter (TC 2.A.60) family. As to quaternary structure, binds to PDZK1. Interaction with PDZK1 is required for expression on hepatocyte surface. In terms of processing, glycosylated. In terms of tissue distribution, highly expressed in liver and kidney, and at lower levels in brain, lung, skeletal muscle and proximal colon.

The protein localises to the basolateral cell membrane. It carries out the reaction estrone 3-sulfate(out) + hydrogencarbonate(in) = estrone 3-sulfate(in) + hydrogencarbonate(out). The enzyme catalyses taurocholate(out) + hydrogencarbonate(in) = taurocholate(in) + hydrogencarbonate(out). The catalysed reaction is L-thyroxine(out) = L-thyroxine(in). It catalyses the reaction prostaglandin E2(out) = prostaglandin E2(in). It carries out the reaction 17beta-estradiol 17-O-(beta-D-glucuronate)(out) = 17beta-estradiol 17-O-(beta-D-glucuronate)(in). The enzyme catalyses dehydroepiandrosterone 3-sulfate(out) = dehydroepiandrosterone 3-sulfate(in). In terms of biological role, mediates the Na(+)-independent transport of organic anions such as steroid sulfate conjugates (dehydroepiandrosterone sulfate (DHEAS), 17-beta-glucuronosyl estradiol, estrone-3-sulfate), conjugated (taurocholate) and unconjugated (cholate) bile acids, prostaglandin E2 (PGE2) and L-thyroxine T4. Also capable of transporting sulfobromophthalein (BSP), ouabain and gadoxetate. Hydrogencarbonate/HCO3(-) acts as the probable counteranion that exchanges for organic anions. Shows a pH-sensitive substrate specificity which may be ascribed to the protonation state of the binding site and leads to a stimulation of substrate transport in an acidic microenvironment. This Rattus norvegicus (Rat) protein is Solute carrier organic anion transporter family member 1A1.